The chain runs to 267 residues: Taurine import ATP-binding protein TauB (267 aa).

Residues 6 to 238 (FNEASLIYPA…DILAGAPASE (233 aa)) enclose the ABC transporter domain. An ATP-binding site is contributed by 43–50 (GRSGSGKT).

It belongs to the ABC transporter superfamily. Taurine importer (TC 3.A.1.17.1) family. As to quaternary structure, the complex is composed of two ATP-binding proteins (TauB), two transmembrane proteins (TauC) and a solute-binding protein (TauA).

It localises to the cell inner membrane. The enzyme catalyses taurine(out) + ATP + H2O = taurine(in) + ADP + phosphate + H(+). Functionally, part of the ABC transporter complex TauABC involved in taurine import. Responsible for energy coupling to the transport system. This Sinorhizobium fredii (strain NBRC 101917 / NGR234) protein is Taurine import ATP-binding protein TauB.